A 509-amino-acid polypeptide reads, in one-letter code: Protein disulfide-isomerase (509 aa).

An N-terminal signal peptide occupies residues 1–19 (MLSRALLCLALAWAARVGA). The Thioredoxin 1 domain maps to 20-136 (DALEEEDNVL…IVNWLKKRTG (117 aa)). Active-site nucleophile residues include C55 and C58. A disulfide bridge links C55 with C58. The residue at position 202 (K202) is an N6-acetyllysine. Residues K224 and K273 each carry the N6-succinyllysine modification. Phosphoserine occurs at positions 333 and 359. Residues 335–477 (ELTAEKITQF…FKKFLESGGQ (143 aa)) form the Thioredoxin 2 domain. Catalysis depends on nucleophile residues C399 and C402. A disulfide bond links C399 and C402. At S429 the chain carries Phosphoserine. The Prevents secretion from ER motif lies at 506–509 (KDEL).

Belongs to the protein disulfide isomerase family. Heterodimer; heterodimerizes with the protein microsomal triglyceride transfer MTTP. Homodimer. Monomers and homotetramers may also occur. Interacts with P4HA2, forming a heterotetramer consisting of 2 alpha subunits (P4HA2) and 2 beta (P4HB), where P4HB plays the role of a structural subunit; this tetramer catalyzes the formation of 4-hydroxyproline in collagen. Also constitutes the structural subunit of the microsomal triacylglycerol transfer protein MTTP in mammalian cells. Stabilizes both enzymes and retain them in the ER without contributing to the catalytic activity. Binds UBQLN1. Interacts with ERO1B. Interacts with ILDR2. Interacts with ERN1/IRE1A (via N-terminus); the interaction is enhanced by phosphorylation of P4HB by FAM20C in response to endoplasmic reticulum stress and results in attenuation of ERN1 activity. In terms of processing, phosphorylation of Ser-359 by FAM20C is induced by endoplasmic reticulum stress and results in a functional switch from oxidoreductase to molecular chaperone. It also promotes interaction with ERN1.

The protein resides in the endoplasmic reticulum. Its subcellular location is the endoplasmic reticulum lumen. The protein localises to the melanosome. It is found in the cell membrane. The enzyme catalyses Catalyzes the rearrangement of -S-S- bonds in proteins.. This multifunctional protein catalyzes the formation, breakage and rearrangement of disulfide bonds. At the cell surface, seems to act as a reductase that cleaves disulfide bonds of proteins attached to the cell. May therefore cause structural modifications of exofacial proteins. Inside the cell, seems to form/rearrange disulfide bonds of nascent proteins. At high concentrations and following phosphorylation by FAM20C, functions as a chaperone that inhibits aggregation of misfolded proteins. At low concentrations, facilitates aggregation (anti-chaperone activity). May be involved with other chaperones in the structural modification of the TG precursor in hormone biogenesis. Also acts as a structural subunit of various enzymes such as prolyl 4-hydroxylase and microsomal triacylglycerol transfer protein MTTP. Receptor for LGALS9; the interaction retains P4HB at the cell surface of Th2 T helper cells, increasing disulfide reductase activity at the plasma membrane, altering the plasma membrane redox state and enhancing cell migration. The protein is Protein disulfide-isomerase (P4hb) of Rattus norvegicus (Rat).